Consider the following 727-residue polypeptide: DNA topoisomerase 3 (727 aa).

The 134-residue stretch at 3–136 (KTVVLAEKPS…LKRLWISSVT (134 aa)) folds into the Toprim domain. Mg(2+) contacts are provided by Glu9 and Asp105. Residues 153–592 (FENLYHSAVA…EMKEYAKQTI (440 aa)) enclose the Topo IA-type catalytic domain. The tract at residues 187 to 192 (SCGRVQ) is interaction with DNA. Residue Tyr310 is the O-(5'-phospho-DNA)-tyrosine intermediate of the active site. Residues 685–711 (RRAKDKNSKASKRDVHSYMKKQNKDEP) show a composition bias toward basic and acidic residues. The segment at 685–713 (RRAKDKNSKASKRDVHSYMKKQNKDEPIN) is disordered.

Belongs to the type IA topoisomerase family. The cofactor is Mg(2+).

The catalysed reaction is ATP-independent breakage of single-stranded DNA, followed by passage and rejoining.. Releases the supercoiling and torsional tension of DNA, which is introduced during the DNA replication and transcription, by transiently cleaving and rejoining one strand of the DNA duplex. Introduces a single-strand break via transesterification at a target site in duplex DNA. The scissile phosphodiester is attacked by the catalytic tyrosine of the enzyme, resulting in the formation of a DNA-(5'-phosphotyrosyl)-enzyme intermediate and the expulsion of a 3'-OH DNA strand. The free DNA strand then undergoes passage around the unbroken strand, thus removing DNA supercoils. Finally, in the religation step, the DNA 3'-OH attacks the covalent intermediate to expel the active-site tyrosine and restore the DNA phosphodiester backbone. In Bacillus licheniformis (strain ATCC 14580 / DSM 13 / JCM 2505 / CCUG 7422 / NBRC 12200 / NCIMB 9375 / NCTC 10341 / NRRL NRS-1264 / Gibson 46), this protein is DNA topoisomerase 3.